The sequence spans 374 residues: MNFNKLKFGATIGIIGGGQLGKMMAQSAQKMGYKVVVLDPSEDCPCRYVAHEFIQAKYDDEKALNQLGQKCDVITYEFENISAQQLKLLCEKYNIPQGYQAIQLLQDRLTEKETLKSAGTKVVPFISVKESTDIDKAIETLGYPFIVKTRFGGYDGKGQVLINNEKDLQEGFKLIETSECVAEKYLNIKKEVSLTVTRGNNNQITFFPLQENEHRNQILFKTIVPARIDKTAEAKEQVNKIIQSIHFIGTFTVEFFIDSNNQLYVNEIAPRPHNSGHYSIEACDYSQFDTHILAVTGQSLPNSIELLKPAVMMNLLGKDLDLLENEFNEHPEWHLHIYGKSGRKDSRKMGHMTVLTNDVNQTEQDMYAKFEGSN.

ATP is bound by residues Arg108, Lys148, 153–159 (GYDGKGQ), 183–186 (EKYL), Glu191, His214, and 266–267 (NE). The 185-residue stretch at 112–296 (KETLKSAGTK…QFDTHILAVT (185 aa)) folds into the ATP-grasp domain.

It belongs to the PurK/PurT family. As to quaternary structure, homodimer.

It catalyses the reaction 5-amino-1-(5-phospho-beta-D-ribosyl)imidazole + hydrogencarbonate + ATP = 5-carboxyamino-1-(5-phospho-D-ribosyl)imidazole + ADP + phosphate + 2 H(+). It participates in purine metabolism; IMP biosynthesis via de novo pathway; 5-amino-1-(5-phospho-D-ribosyl)imidazole-4-carboxylate from 5-amino-1-(5-phospho-D-ribosyl)imidazole (N5-CAIR route): step 1/2. In terms of biological role, catalyzes the ATP-dependent conversion of 5-aminoimidazole ribonucleotide (AIR) and HCO(3)(-) to N5-carboxyaminoimidazole ribonucleotide (N5-CAIR). The protein is N5-carboxyaminoimidazole ribonucleotide synthase of Staphylococcus aureus (strain Mu50 / ATCC 700699).